The chain runs to 433 residues: D-amino acid dehydrogenase (433 aa).

FAD is bound at residue 3–17 (VLVLGSGVIGTASAY).

This sequence belongs to the DadA oxidoreductase family. FAD serves as cofactor.

It catalyses the reaction a D-alpha-amino acid + A + H2O = a 2-oxocarboxylate + AH2 + NH4(+). Its pathway is amino-acid degradation; D-alanine degradation; NH(3) and pyruvate from D-alanine: step 1/1. Its function is as follows. Oxidative deamination of D-amino acids. The sequence is that of D-amino acid dehydrogenase from Pseudomonas putida (strain W619).